Consider the following 483-residue polypeptide: Regulatory protein ViaA (483 aa).

It belongs to the ViaA family. In terms of assembly, homodimer. Interacts with RavA.

The protein resides in the cytoplasm. Functionally, component of the RavA-ViaA chaperone complex, which may act on the membrane to optimize the function of some of the respiratory chains. ViaA stimulates the ATPase activity of RavA. The protein is Regulatory protein ViaA of Cronobacter sakazakii (strain ATCC BAA-894) (Enterobacter sakazakii).